Here is a 214-residue protein sequence, read N- to C-terminus: Adenylate kinase (214 aa).

10 to 15 (GAGKGT) lines the ATP pocket. Positions 30 to 59 (STGDMLRAAVKAGTPLGLEAKKVMDAGQLV) are NMP. AMP-binding positions include Thr-31, Arg-36, 57 to 59 (QLV), 85 to 88 (GFPR), and Gln-92. The tract at residues 122 to 159 (GRRVHPGSGRVYHVVFNPPKVEGKDDVTGEDLAIRPDD) is LID. Residues Arg-123 and 132–133 (VY) each bind ATP. 2 residues coordinate AMP: Arg-156 and Arg-167. Gln-200 is an ATP binding site.

This sequence belongs to the adenylate kinase family. In terms of assembly, monomer.

It localises to the cytoplasm. The catalysed reaction is AMP + ATP = 2 ADP. It functions in the pathway purine metabolism; AMP biosynthesis via salvage pathway; AMP from ADP: step 1/1. In terms of biological role, catalyzes the reversible transfer of the terminal phosphate group between ATP and AMP. Plays an important role in cellular energy homeostasis and in adenine nucleotide metabolism. The chain is Adenylate kinase from Shewanella sp. (strain ANA-3).